Reading from the N-terminus, the 419-residue chain is Protein FAM181B (419 aa).

Positions 107-157 (LMGAAPPGPSSPGAADTPAKRPLAGAQTVPVPVPAHGKAAPRREASQAAAA) are disordered.

Belongs to the FAM181 family.

The polypeptide is Protein FAM181B (FAM181B) (Bos taurus (Bovine)).